The primary structure comprises 800 residues: Internalin A (800 aa).

A signal peptide spans 1-35 (MRKKRYVWLKSILVAILVFGSGVWINTSNGTNAQA). The LRRNT domain maps to 36–76 (ATITQDTPINQIFTDTALAEKMKTVLGKTNVTDTVSQTDLD). LRR repeat units lie at residues 77 to 98 (QVTTLQADRLGIKSIDGVEYLN), 99 to 120 (NLTQINFSNNQLTDITPLKNLT), 121 to 142 (KLVDILMNNNQIADITPLANLT), 143 to 164 (NLTGLTLFNNQITDIDPLKNLT), 165 to 186 (NLNRLELSSNTISDISALSGLT), 187 to 207 (SLQQLSFGNQVTDLKPLANLT), 208 to 229 (TLERLDISSNKVSDISVLAKLT), 230 to 251 (NLESLIATNNQISDITPLGILT), 252 to 273 (NLDELSLNGNQLKDIGTLASLT), 274 to 295 (NLTDLDLANNQISNLAPLSGLT), 296 to 317 (KLTELKLGANQISNISPLAGLT), 318 to 339 (ALTNLELNENQLEDISPISNLK), 340 to 361 (NLTYLTLYFNNISDISPVSSLT), 362 to 383 (KLQRLFFYNNKVSDVSSLANLT), and 384 to 405 (NINWLSAGHNQISDLTPLANLT). The region spanning 416-505 (AWTNAPVNYK…AIFNVKFHVD (90 aa)) is the LRRCT domain. One copy of the B-1 repeat lies at 518-587 (LLTEPAKPVK…TTSQTVDYQG (70 aa)). The tract at residues 518-706 (LLTEPAKPVK…ITLYAQFTKN (189 aa)) is 3 X approximate tandem repeats, type B. Residues 588 to 657 (LLQEPTAPTK…STTQAVDYQG (70 aa)) form a B-2 repeat. The stretch at 658–706 (LLKEPKAPTKAGYTFKGWYDEKTDGKKWDFATDKMPANDITLYAQFTKN) is one B-3 repeat. A disordered region spans residues 705–757 (KNPVAPPTTGGNTPPTTNNGGNTTPPSANIPGSDTSNTSTGNSASTTSTMNAY). Residues 711 to 753 (PTTGGNTPPTTNNGGNTTPPSANIPGSDTSNTSTGNSASTTST) show a composition bias toward low complexity. An LPXTG sorting signal motif is present at residues 767–771 (LPTTG). Threonine 770 carries the post-translational modification Pentaglycyl murein peptidoglycan amidated threonine. Residues 771-800 (GDSDNALYLLLGLLAVGTAMALTKKARASK) constitute a propeptide, removed by sortase A.

This sequence belongs to the internalin family. In terms of assembly, interacts with host (human) cadherin-1 (CDH1). The formation of the complex between inlA and cadherin-1 is calcium-dependent. Mutagenesis studies show it is possible to increase the affinity of InlA for CDH1 by rational engineering of InlA residues.

It is found in the secreted. Its subcellular location is the cell wall. Its activity is regulated as follows. Bacterial uptake is inhibited by EDTA and by anti-E-cadherin antibodies. Mediates the entry of L.monocytogenes into host intestinal epithelial cells; transformation with inlA alone allows L.innocua (a non-invasive species) to be taken up by host cells. Binds to human receptor cadherin-1 (E-cadherin, CDH1); the chicken homolog of cadherin-1 but not cadherin-2 function as receptors. Mouse cadherin-1 is not a receptor, however mutating a single surface-exposed residue (Glu-172 to Pro in mouse) allows cadherin-1 to act as a receptor for InlA. The protein is Internalin A of Listeria monocytogenes serovar 1/2a (strain ATCC BAA-679 / EGD-e).